The primary structure comprises 562 residues: mRNA cleavage and polyadenylation factor CLP1 (562 aa).

Residues 1 to 27 are disordered; sequence MSLPGLELSQQPIEARRAPPQPTQISL. Residues E32, K71, and 154-159 each bind ATP; that span reads DAGKTS. The interval 415–483 is disordered; that stretch reads EDEYDPSKFD…STTPFTNLPS (69 aa). Over residues 445–479 the composition is skewed to low complexity; it reads SLQPPSGLLPGLRSELPSATTGFPSASTSSTTPFT.

The protein belongs to the Clp1 family. Clp1 subfamily. As to quaternary structure, component of a pre-mRNA cleavage factor complex. Interacts directly with PCF11.

It localises to the nucleus. Required for endonucleolytic cleavage during polyadenylation-dependent pre-mRNA 3'-end formation. The chain is mRNA cleavage and polyadenylation factor CLP1 from Coccidioides immitis (strain RS) (Valley fever fungus).